The following is a 418-amino-acid chain: UDP-N-acetylglucosamine 1-carboxyvinyltransferase (418 aa).

22–23 serves as a coordination point for phosphoenolpyruvate; sequence KN. Arginine 91 serves as a coordination point for UDP-N-acetyl-alpha-D-glucosamine. The active-site Proton donor is the cysteine 115. Cysteine 115 is subject to 2-(S-cysteinyl)pyruvic acid O-phosphothioketal. UDP-N-acetyl-alpha-D-glucosamine contacts are provided by aspartate 305 and isoleucine 327.

This sequence belongs to the EPSP synthase family. MurA subfamily.

It is found in the cytoplasm. It carries out the reaction phosphoenolpyruvate + UDP-N-acetyl-alpha-D-glucosamine = UDP-N-acetyl-3-O-(1-carboxyvinyl)-alpha-D-glucosamine + phosphate. Its pathway is cell wall biogenesis; peptidoglycan biosynthesis. In terms of biological role, cell wall formation. Adds enolpyruvyl to UDP-N-acetylglucosamine. This chain is UDP-N-acetylglucosamine 1-carboxyvinyltransferase, found in Aeromonas salmonicida (strain A449).